A 312-amino-acid polypeptide reads, in one-letter code: Ornithine carbamoyltransferase (312 aa).

Carbamoyl phosphate-binding positions include 57–60 (STRT), glutamine 84, arginine 108, and 135–138 (HPCQ). L-ornithine-binding positions include asparagine 166, aspartate 226, and 230–231 (SM). Carbamoyl phosphate is bound by residues 265–266 (CL) and arginine 293.

It belongs to the aspartate/ornithine carbamoyltransferase superfamily. OTCase family.

The protein localises to the cytoplasm. The catalysed reaction is carbamoyl phosphate + L-ornithine = L-citrulline + phosphate + H(+). The protein operates within amino-acid biosynthesis; L-arginine biosynthesis; L-arginine from L-ornithine and carbamoyl phosphate: step 1/3. Its function is as follows. Reversibly catalyzes the transfer of the carbamoyl group from carbamoyl phosphate (CP) to the N(epsilon) atom of ornithine (ORN) to produce L-citrulline. This is Ornithine carbamoyltransferase from Brucella ovis (strain ATCC 25840 / 63/290 / NCTC 10512).